Reading from the N-terminus, the 162-residue chain is Cyclic pyranopterin monophosphate synthase (162 aa).

Substrate contacts are provided by residues 75–77 (LCH) and 113–114 (ME). Aspartate 128 is a catalytic residue.

Belongs to the MoaC family. In terms of assembly, homohexamer; trimer of dimers.

The enzyme catalyses (8S)-3',8-cyclo-7,8-dihydroguanosine 5'-triphosphate = cyclic pyranopterin phosphate + diphosphate. It participates in cofactor biosynthesis; molybdopterin biosynthesis. In terms of biological role, catalyzes the conversion of (8S)-3',8-cyclo-7,8-dihydroguanosine 5'-triphosphate to cyclic pyranopterin monophosphate (cPMP). This is Cyclic pyranopterin monophosphate synthase from Xanthobacter autotrophicus (strain ATCC BAA-1158 / Py2).